We begin with the raw amino-acid sequence, 341 residues long: Phosphate acyltransferase (341 aa).

The protein belongs to the PlsX family. As to quaternary structure, homodimer. Probably interacts with PlsY.

The protein localises to the cytoplasm. The enzyme catalyses a fatty acyl-[ACP] + phosphate = an acyl phosphate + holo-[ACP]. It participates in lipid metabolism; phospholipid metabolism. In terms of biological role, catalyzes the reversible formation of acyl-phosphate (acyl-PO(4)) from acyl-[acyl-carrier-protein] (acyl-ACP). This enzyme utilizes acyl-ACP as fatty acyl donor, but not acyl-CoA. The sequence is that of Phosphate acyltransferase from Aliivibrio fischeri (strain ATCC 700601 / ES114) (Vibrio fischeri).